Reading from the N-terminus, the 94-residue chain is DNA-directed RNA polymerase subunit omega (94 aa).

The protein belongs to the RNA polymerase subunit omega family. In terms of assembly, the RNAP catalytic core consists of 2 alpha, 1 beta, 1 beta' and 1 omega subunit. When a sigma factor is associated with the core the holoenzyme is formed, which can initiate transcription.

The enzyme catalyses RNA(n) + a ribonucleoside 5'-triphosphate = RNA(n+1) + diphosphate. In terms of biological role, promotes RNA polymerase assembly. Latches the N- and C-terminal regions of the beta' subunit thereby facilitating its interaction with the beta and alpha subunits. The chain is DNA-directed RNA polymerase subunit omega from Frankia alni (strain DSM 45986 / CECT 9034 / ACN14a).